The sequence spans 105 residues: MQGKALQDFVIDKIDDLKGQDIIALDVQGKSSITDCMIICTGTSSRHVMSIADHVVQESRAAGLLPLGVEGENSADWIVVDLGDVIVHVMQEESRRLYELEKLWS.

The protein belongs to the Iojap/RsfS family. Interacts with ribosomal protein uL14 (rplN).

Its subcellular location is the cytoplasm. Functionally, functions as a ribosomal silencing factor. Interacts with ribosomal protein uL14 (rplN), blocking formation of intersubunit bridge B8. Prevents association of the 30S and 50S ribosomal subunits and the formation of functional ribosomes, thus repressing translation. The chain is Ribosomal silencing factor RsfS from Escherichia coli O6:H1 (strain CFT073 / ATCC 700928 / UPEC).